Consider the following 246-residue polypeptide: Probable transcriptional regulatory protein Teth39_1009 (246 aa).

The segment at 1–21 (MSGHSKWANIKHKKEKMDAKK) is disordered.

Belongs to the TACO1 family.

Its subcellular location is the cytoplasm. The chain is Probable transcriptional regulatory protein Teth39_1009 from Thermoanaerobacter pseudethanolicus (strain ATCC 33223 / 39E) (Clostridium thermohydrosulfuricum).